The following is a 584-amino-acid chain: Proline--tRNA ligase (584 aa).

This sequence belongs to the class-II aminoacyl-tRNA synthetase family. ProS type 1 subfamily. As to quaternary structure, homodimer.

It is found in the cytoplasm. The enzyme catalyses tRNA(Pro) + L-proline + ATP = L-prolyl-tRNA(Pro) + AMP + diphosphate. Functionally, catalyzes the attachment of proline to tRNA(Pro) in a two-step reaction: proline is first activated by ATP to form Pro-AMP and then transferred to the acceptor end of tRNA(Pro). As ProRS can inadvertently accommodate and process non-cognate amino acids such as alanine and cysteine, to avoid such errors it has two additional distinct editing activities against alanine. One activity is designated as 'pretransfer' editing and involves the tRNA(Pro)-independent hydrolysis of activated Ala-AMP. The other activity is designated 'posttransfer' editing and involves deacylation of mischarged Ala-tRNA(Pro). The misacylated Cys-tRNA(Pro) is not edited by ProRS. This Mycobacterium sp. (strain KMS) protein is Proline--tRNA ligase.